The following is a 188-amino-acid chain: RWD domain-containing protein 4 (188 aa).

Ser-2 bears the N-acetylserine mark. Positions 9-111 (MELEALRSIY…EYAKDNKEQF (103 aa)) constitute an RWD domain. Residues 132 to 167 (TPNTAPSSKKKDKKEQLSKAQKRKLADKTDHKGELP) form a disordered region. The span at 155 to 166 (KLADKTDHKGEL) shows a compositional bias: basic and acidic residues.

The polypeptide is RWD domain-containing protein 4 (RWDD4) (Homo sapiens (Human)).